The primary structure comprises 304 residues: Glutaminase (304 aa).

Residues S63, N114, E158, N165, Y189, Y240, and V258 each coordinate substrate.

It belongs to the glutaminase family. As to quaternary structure, homotetramer.

The enzyme catalyses L-glutamine + H2O = L-glutamate + NH4(+). The polypeptide is Glutaminase (Shewanella putrefaciens (strain CN-32 / ATCC BAA-453)).